Consider the following 431-residue polypeptide: MDIVKQRYHELFDLRVRGPRMKMADRLEHFTWAWFASAMGTGGIGMVTSLYHFRFYGLNTLGKIIFIFQLSILTLYICCITFRFIRYPGTLSKTWKNPSEVLFMPTALLAIATSISNLYPYAFPYTGEWMVWLIRILYWIFVAVACIFVISLFYSLFHAHPFRINTIIPALVLPIFPCMICGVIASAIVESQPARQAKNMVVAGIAFQGLGFWIYIIVYAVNMCRFFTVGLQPAADRPGMFILVSPPSFTGLTLLDLAFGAKAKRPYIFVGDNSSEYLEFVATFMALFMIGLGIFNFCLAFVSVVAGFCTRQRIKFKVSWFAMIFANVGLVMDVQELGRAIDSKAVCIVGQVCGVTITIVWIILILLTLRAVYVQELLYPGKDEDIDTILPNVLEYYRHLEEEEKDEAERSKRKAEESDGKTTRELTSGGL.

A run of 10 helical transmembrane segments spans residues 30-50, 62-82, 101-121, 136-156, 167-187, 201-221, 239-259, 284-304, 318-338, and 346-366; these read FTWA…VTSL, GKII…CITF, VLFM…LYPY, ILYW…FYSL, IIPA…IASA, VVAG…VYAV, GMFI…DLAF, FMAL…FVSV, VSWF…QELG, and VCIV…ILIL. Basic and acidic residues predominate over residues 402–424; sequence EEEKDEAERSKRKAEESDGKTTR. Residues 402–431 are disordered; it reads EEEKDEAERSKRKAEESDGKTTRELTSGGL.

It belongs to the tellurite-resistance/dicarboxylate transporter (TDT) family.

It localises to the membrane. This is Putative malic acid transport protein from Schizosaccharomyces pombe (strain 972 / ATCC 24843) (Fission yeast).